A 2179-amino-acid chain; its full sequence is Genome polyprotein (2179 aa).

Disordered stretches follow at residues 503-531 (FSKD…PTGD), 623-678 (QPQK…YPIQ), 703-738 (RAKK…GDQF), and 753-847 (EPSV…PPKM). Polar residues-rich tracts occupy residues 630 to 642 (DTPS…QPFH) and 659 to 678 (TTFA…YPIQ). Residues 758 to 770 (SEDTSSQSYISTE) are compositionally biased toward polar residues. Positions 783–806 (SEESTQLSQLSSSSNDSPENNENT) are enriched in low complexity. Residues 819–831 (EISEVEDEVDGMT) show a composition bias toward acidic residues. Residues 1112–1125 (CFTCGKIGHFSRNC) form a CCHC-type zinc finger. Residue Asp-1226 is the For protease activity; shared with dimeric partner of the active site. Positions 1409–1591 (QQFDLIEPSD…NKIQFLGMDF (183 aa)) constitute a Reverse transcriptase domain. Residues Asp-1479, Asp-1542, and Asp-1543 each contribute to the Mg(2+) site. Disordered regions lie at residues 1822-1848 (QRRT…KLSH), 2114-2144 (NIVK…KNKC), and 2160-2179 (YSTK…EPCV). Positions 1827-1840 (SSSTKSKADSSQST) are enriched in low complexity. The segment covering 2120-2144 (PRKRKGKAKSRSSTRSEKRRAKNKC) has biased composition (basic residues). The span at 2162–2179 (TKPSTPSWTQDSSSEPCV) shows a compositional bias: polar residues.

The protein belongs to the Petuviruses genome polyprotein family.

The enzyme catalyses DNA(n) + a 2'-deoxyribonucleoside 5'-triphosphate = DNA(n+1) + diphosphate. In terms of biological role, encodes presumably for at least four polypeptides: Movement protein (MP), capsid protein (CP), Protease (PR), and reverse transcriptase (RT). The sequence is that of Genome polyprotein from Petunia vein clearing virus (isolate Shepherd) (PVCV).